Here is a 347-residue protein sequence, read N- to C-terminus: Phosphoribosylformylglycinamidine cyclo-ligase (347 aa).

The protein belongs to the AIR synthase family.

It localises to the cytoplasm. It carries out the reaction 2-formamido-N(1)-(5-O-phospho-beta-D-ribosyl)acetamidine + ATP = 5-amino-1-(5-phospho-beta-D-ribosyl)imidazole + ADP + phosphate + H(+). It functions in the pathway purine metabolism; IMP biosynthesis via de novo pathway; 5-amino-1-(5-phospho-D-ribosyl)imidazole from N(2)-formyl-N(1)-(5-phospho-D-ribosyl)glycinamide: step 2/2. This Yersinia pseudotuberculosis serotype IB (strain PB1/+) protein is Phosphoribosylformylglycinamidine cyclo-ligase.